The sequence spans 248 residues: MADWVTGKVTKVQNWTDALFSLTVHAPVLPFTAGQFTKLGLEIDGERVQRAYSYVNSPDNPDLEFYLVTVPDGKLSPRLAALKPGDEVQVVSEAAGFFVLDEVPHCETLWMLATGTAIGPYLSILQLGKDLDRFKNLVLVHAARYAADLSYLPLMQELEKRYEGKLRIQTVVSRETAAGSLTGRIPALIESGELESTIGLPMNKETSHVMLCGNPQMVRDTQQLLKETRQMTKHLRRRPGHMTAEHYW.

Residues 2 to 101 (ADWVTGKVTK…SEAAGFFVLD (100 aa)) enclose the FAD-binding FR-type domain. Aspartate 17 is a binding site for NADP(+). FAD contacts are provided by residues 50–53 (RAYS), tyrosine 66, 74–76 (KLS), and threonine 116. Residues 143-144 (AR), 173-174 (SR), arginine 184, 214-216 (NPQ), and aspartate 220 contribute to the NADP(+) site. 247-248 (YW) contributes to the FAD binding site.

Belongs to the ferredoxin--NADP reductase type 1 family. In terms of assembly, monomer. FAD serves as cofactor.

It localises to the cytoplasm. It catalyses the reaction 2 reduced [2Fe-2S]-[ferredoxin] + NADP(+) + H(+) = 2 oxidized [2Fe-2S]-[ferredoxin] + NADPH. The enzyme catalyses reduced [flavodoxin] + NADP(+) = oxidized [flavodoxin] + NADPH + 2 H(+). Its function is as follows. Transports electrons between flavodoxin or ferredoxin and NADPH. Reduces flavodoxin 1, flavodoxin 2 and ferredoxin, ferredoxin being the kinetically and thermodynamically preferred partner. Required for the activation of several enzymes such as pyruvate formate-lyase, anaerobic ribonucleotide reductase and cobalamin-dependent methionine synthase. This is Flavodoxin/ferredoxin--NADP reductase from Escherichia coli (strain K12).